The following is a 202-amino-acid chain: Dephospho-CoA kinase (202 aa).

The 199-residue stretch at 4–202 folds into the DPCK domain; sequence VIGLTGGIAT…TDKGFINKER (199 aa). Residue 12–17 coordinates ATP; sequence ATGKST.

It belongs to the CoaE family.

The protein localises to the cytoplasm. The enzyme catalyses 3'-dephospho-CoA + ATP = ADP + CoA + H(+). The protein operates within cofactor biosynthesis; coenzyme A biosynthesis; CoA from (R)-pantothenate: step 5/5. Catalyzes the phosphorylation of the 3'-hydroxyl group of dephosphocoenzyme A to form coenzyme A. This chain is Dephospho-CoA kinase, found in Staphylococcus haemolyticus (strain JCSC1435).